The chain runs to 322 residues: Large ribosomal subunit protein uL10 (322 aa).

The disordered stretch occupies residues 294 to 322 (APAAAAKAEKEEEPAEESDDEMGFGLFDE). The segment covering 304 to 322 (EEEPAEESDDEMGFGLFDE) has biased composition (acidic residues).

It belongs to the universal ribosomal protein uL10 family. As to quaternary structure, P0 forms a pentameric complex by interaction with dimers of P1 and P2. In terms of processing, phosphorylated.

In terms of biological role, ribosomal protein P0 is the functional equivalent of E.coli protein L10. The chain is Large ribosomal subunit protein uL10 from Lupinus luteus (European yellow lupine).